Here is a 92-residue protein sequence, read N- to C-terminus: Small ribosomal subunit protein uS19 (92 aa).

A disordered region spans residues 73-92 (EFSPTRSFRGHAGAKNKGKK). The span at 80–92 (FRGHAGAKNKGKK) shows a compositional bias: basic residues.

The protein belongs to the universal ribosomal protein uS19 family.

Protein S19 forms a complex with S13 that binds strongly to the 16S ribosomal RNA. The chain is Small ribosomal subunit protein uS19 from Flavobacterium psychrophilum (strain ATCC 49511 / DSM 21280 / CIP 103535 / JIP02/86).